The sequence spans 351 residues: Methionine import ATP-binding protein MetN (351 aa).

The ABC transporter domain maps to 2-241; that stretch reads IELRNVTKTY…PKTEIAKKFT (240 aa). Residue 38–45 participates in ATP binding; the sequence is GKSGAGKS.

Belongs to the ABC transporter superfamily. Methionine importer (TC 3.A.1.24) family. As to quaternary structure, the complex is composed of two ATP-binding proteins (MetN), two transmembrane proteins (MetI) and a solute-binding protein (MetQ).

Its subcellular location is the cell inner membrane. The enzyme catalyses L-methionine(out) + ATP + H2O = L-methionine(in) + ADP + phosphate + H(+). It carries out the reaction D-methionine(out) + ATP + H2O = D-methionine(in) + ADP + phosphate + H(+). Part of the ABC transporter complex MetNIQ involved in methionine import. Responsible for energy coupling to the transport system. The polypeptide is Methionine import ATP-binding protein MetN (Coxiella burnetii (strain RSA 493 / Nine Mile phase I)).